The sequence spans 149 residues: Calmodulin (149 aa).

A2 bears the N-acetylalanine mark. EF-hand domains are found at residues 8–43, 44–79, 81–116, and 117–149; these read EQIA…LGQN, PTEA…KMKD, DSEE…LGEK, and LSED…MMSK. 20 residues coordinate Ca(2+): D21, D23, D25, T27, E32, D57, D59, N61, T63, E68, D94, D96, N98, Y100, E105, D130, D132, D134, Q136, and E141.

The protein belongs to the calmodulin family.

Its function is as follows. Calmodulin mediates the control of a large number of enzymes, ion channels and other proteins by Ca(2+). Among the enzymes to be stimulated by the calmodulin-Ca(2+) complex are a number of protein kinases and phosphatases. The polypeptide is Calmodulin (CMD1) (Blastocladiella emersonii (Aquatic fungus)).